Consider the following 181-residue polypeptide: Oligoribonuclease (181 aa).

The Exonuclease domain maps to 8–171 (LIWIDLEMTG…DDIRESVGEL (164 aa)). The active site involves Tyr129.

The protein belongs to the oligoribonuclease family.

Its subcellular location is the cytoplasm. In terms of biological role, 3'-to-5' exoribonuclease specific for small oligoribonucleotides. The sequence is that of Oligoribonuclease from Serratia proteamaculans (strain 568).